Consider the following 190-residue polypeptide: Crossover junction endodeoxyribonuclease RuvC (190 aa).

Residues D8, E67, and D139 contribute to the active site. Mg(2+)-binding residues include D8, E67, and D139.

The protein belongs to the RuvC family. In terms of assembly, homodimer which binds Holliday junction (HJ) DNA. The HJ becomes 2-fold symmetrical on binding to RuvC with unstacked arms; it has a different conformation from HJ DNA in complex with RuvA. In the full resolvosome a probable DNA-RuvA(4)-RuvB(12)-RuvC(2) complex forms which resolves the HJ. Mg(2+) is required as a cofactor.

The protein resides in the cytoplasm. It carries out the reaction Endonucleolytic cleavage at a junction such as a reciprocal single-stranded crossover between two homologous DNA duplexes (Holliday junction).. The RuvA-RuvB-RuvC complex processes Holliday junction (HJ) DNA during genetic recombination and DNA repair. Endonuclease that resolves HJ intermediates. Cleaves cruciform DNA by making single-stranded nicks across the HJ at symmetrical positions within the homologous arms, yielding a 5'-phosphate and a 3'-hydroxyl group; requires a central core of homology in the junction. The consensus cleavage sequence is 5'-(A/T)TT(C/G)-3'. Cleavage occurs on the 3'-side of the TT dinucleotide at the point of strand exchange. HJ branch migration catalyzed by RuvA-RuvB allows RuvC to scan DNA until it finds its consensus sequence, where it cleaves and resolves the cruciform DNA. The chain is Crossover junction endodeoxyribonuclease RuvC from Haemophilus influenzae (strain 86-028NP).